The following is a 337-amino-acid chain: Palmitoyltransferase ZDHHC15 (337 aa).

Residues 1-20 (MRRGWKMALSGGLRCCRRVL) are Cytoplasmic-facing. A helical membrane pass occupies residues 21–41 (SWVPVLVIVLVVLWSYYAYVF). Topologically, residues 42–56 (ELCLVTVLSPAEKVI) are lumenal. The chain crosses the membrane as a helical span at residues 57 to 77 (YLILYHAIFVFFAWTYWKSIF). The Cytoplasmic portion of the chain corresponds to 78-172 (TLPQQPNQKF…NNCIGFSNYK (95 aa)). Positions 129–179 (RFCDRCHLIKPDRCHHCSVCAMCVLKMDHHCPWVNNCIGFSNYKFFLQFLA) constitute a DHHC domain. Zn(2+)-binding residues include Cys131, Cys134, His144, Cys145, Cys148, Cys151, and His158. The active-site S-palmitoyl cysteine intermediate is the Cys159. Cys165 serves as a coordination point for Zn(2+). The chain crosses the membrane as a helical span at residues 173–193 (FFLQFLAYSVLYCLYIATTVF). The Lumenal segment spans residues 194 to 210 (SYFIKYWRGELPSVRSK). A helical membrane pass occupies residues 211–234 (FHVLFLLFVACMFFVSLVILFGYH). Residues 235–337 (CWLVSRNKTT…LSSLAVESET (103 aa)) lie on the Cytoplasmic side of the membrane. Positions 293 to 337 (HSFPMRSMNESQNPLLANEEPWEDNEDESQDYPEGLSSLAVESET) are disordered. Over residues 312–323 (EPWEDNEDESQD) the composition is skewed to acidic residues.

The protein belongs to the DHHC palmitoyltransferase family. In terms of processing, autopalmitoylated (in vitro). As to expression, in brain, expressed in both excitatory and inhibitory neurons but not expressed by glial cells.

The protein localises to the golgi apparatus membrane. It localises to the postsynaptic density. The enzyme catalyses L-cysteinyl-[protein] + hexadecanoyl-CoA = S-hexadecanoyl-L-cysteinyl-[protein] + CoA. It carries out the reaction L-cysteinyl-[protein] + tetradecanoyl-CoA = S-tetradecanoyl-L-cysteinyl-[protein] + CoA. The catalysed reaction is L-cysteinyl-[protein] + octadecanoyl-CoA = S-octadecanoyl-L-cysteinyl-[protein] + CoA. Its function is as follows. Palmitoyltransferase that catalyzes the addition of palmitate onto various protein substrates. Has no stringent fatty acid selectivity and in addition to palmitate can also transfer onto target proteins myristate from tetradecanoyl-CoA and stearate from octadecanoyl-CoA. Palmitoylates IGF2R and SORT1, promoting their partitioning to an endosomal membrane subdomain where they can interact with the retromer cargo-selective complex. Thereby, regulates retrograde transport from endosomes to the Golgi apparatus of these lysosomal sorting receptors and plays a role in trafficking of lysosomal proteins. In the nervous system, catalyzes the palmitoylation of DLG4/PSD95 and regulates its synaptic clustering and function in synaptogenesis. Could be involved in the differentiation of dopaminergic neurons and the development of the diencephalon. Could also catalyze the palmitoylation of GAP43. Could also palmitoylate DNAJC5 and regulate its localization to the Golgi membrane. Could also palmitoylate FYN as shown in vitro. May palmitoylate CALHM3 subunit of gustatory voltage-gated ion channels and modulate channel gating and kinetics. This chain is Palmitoyltransferase ZDHHC15, found in Rattus norvegicus (Rat).